A 238-amino-acid chain; its full sequence is 7-cyano-7-deazaguanine synthase (238 aa).

Residue 15-25 (FSGGQDSTTCL) participates in ATP binding. Zn(2+)-binding residues include Cys-203, Cys-218, Cys-221, and Cys-224.

Belongs to the QueC family. Requires Zn(2+) as cofactor.

The catalysed reaction is 7-carboxy-7-deazaguanine + NH4(+) + ATP = 7-cyano-7-deazaguanine + ADP + phosphate + H2O + H(+). Its pathway is purine metabolism; 7-cyano-7-deazaguanine biosynthesis. In terms of biological role, catalyzes the ATP-dependent conversion of 7-carboxy-7-deazaguanine (CDG) to 7-cyano-7-deazaguanine (preQ(0)). This is 7-cyano-7-deazaguanine synthase from Alkalilimnicola ehrlichii (strain ATCC BAA-1101 / DSM 17681 / MLHE-1).